A 528-amino-acid polypeptide reads, in one-letter code: GMP synthase [glutamine-hydrolyzing] (528 aa).

The Glutamine amidotransferase type-1 domain maps to 22–212 (AILVLDFGSQ…VFKICQSQTN (191 aa)). Cysteine 99 acts as the Nucleophile in catalysis. Active-site residues include histidine 186 and glutamate 188. Residues 213–403 (WSLESNVETI…LGIKKEALYR (191 aa)) enclose the GMPS ATP-PPase domain. 240–246 (SGGTDSL) serves as a coordination point for ATP.

In terms of assembly, homodimer.

It catalyses the reaction XMP + L-glutamine + ATP + H2O = GMP + L-glutamate + AMP + diphosphate + 2 H(+). It participates in purine metabolism; GMP biosynthesis; GMP from XMP (L-Gln route): step 1/1. In terms of biological role, catalyzes the synthesis of GMP from XMP. This chain is GMP synthase [glutamine-hydrolyzing], found in Borrelia garinii subsp. bavariensis (strain ATCC BAA-2496 / DSM 23469 / PBi) (Borreliella bavariensis).